A 448-amino-acid chain; its full sequence is FAD-linked oxidoreductase nodO (448 aa).

The 172-residue stretch at 35–206 folds into the FAD-binding PCMH-type domain; it reads PEHFPLAIVK…IRFFLKTCPL (172 aa).

Belongs to the oxygen-dependent FAD-linked oxidoreductase family. The cofactor is FAD.

The protein operates within secondary metabolite biosynthesis. Its function is as follows. FAD-linked oxidoreductase; part of the gene cluster that mediates the biosynthesis of the indole diterpenes nodulisporic acids (NA). Nodulisporic acid A (NAA) and its chemically modified derivatives are of particular significance because of their highly potent insecticidal activity against blood-feeding arthropods and lack of observable adverse effects on mammals, in particular the tremogenicity associated with the paspaline-derived IDTs is not observed. The geranylgeranyl diphosphate (GGPP) synthase ggs1, localized outside of the cluster, is proposed to catalyze the first step in nodulisporic acid biosynthesis via conversion of farnesyl pyrophosphate and isopentyl pyrophosphate into geranylgeranyl pyrophosphate (GGPP). Condensation of indole-3-glycerol phosphate with GGPP by the prenyl transferase nodC then forms 3-geranylgeranylindole (3-GGI). Epoxidation by the FAD-dependent monooxygenase nodM leads to a single-epoxidized-GGI that is substrate of the terpene cyclase nodB for cyclization to yield emindole SB. The terminal methyl carbon, C28, of emindole SB is then oxidized by the cytochrome P450 monooxygenase nodW to produce nodulisporic acid F (NAF), the pentacyclic core of NAA. NAF is converted to nodulisporic acid E (NAE) via prenylation. This step is probably performed by one of the indole diterpene prenyltransferases nodD1 or nodD2. Several oxidation steps performed by the FAD-linked oxidoreductase nodO and one of the cytochrome P450 monooxygenase nodR, nodX or nodZ further convert NAE to nodulisporic acid D (NAD). NAD is substrate of cytochrome P450 monooxygenase nodJ to produce the precursor of nodulisporic acid C (NAC), converted to NAC by one of the indole diterpene prenyltransferases nodD1 or nodD2. The FAD-dependent monooxygenase nodY2 then oxidizes NAC to nodulisporic acid B (NAB). Finally NAB is converted to NAA by one of the cytochrome P450 monooxygenases nodR, nodX or nodZ. The protein is FAD-linked oxidoreductase nodO of Hypoxylon pulicicidum.